A 333-amino-acid polypeptide reads, in one-letter code: uncharacterized protein (333 aa).

The region spanning 45–318 is the Fe/B12 periplasmic-binding domain; that stretch reads NVIVSDSMFI…EYVKIIHPKI (274 aa).

This is an uncharacterized protein from Methanocaldococcus jannaschii (strain ATCC 43067 / DSM 2661 / JAL-1 / JCM 10045 / NBRC 100440) (Methanococcus jannaschii).